A 206-amino-acid polypeptide reads, in one-letter code: A-type ATP synthase subunit E (206 aa).

It belongs to the V-ATPase E subunit family. As to quaternary structure, has multiple subunits with at least A(3), B(3), C, D, E, F, H, I and proteolipid K(x).

Its subcellular location is the cell membrane. Component of the A-type ATP synthase that produces ATP from ADP in the presence of a proton gradient across the membrane. This Methanothermobacter thermautotrophicus (strain ATCC 29096 / DSM 1053 / JCM 10044 / NBRC 100330 / Delta H) (Methanobacterium thermoautotrophicum) protein is A-type ATP synthase subunit E.